The following is a 103-amino-acid chain: Integration host factor subunit alpha (103 aa).

Residues 50 to 72 (GNFNLRDKGERPGRNPKTGEEIP) are disordered. Residues 54-69 (LRDKGERPGRNPKTGE) are compositionally biased toward basic and acidic residues.

The protein belongs to the bacterial histone-like protein family. In terms of assembly, heterodimer of an alpha and a beta chain.

Functionally, this protein is one of the two subunits of integration host factor, a specific DNA-binding protein that functions in genetic recombination as well as in transcriptional and translational control. This is Integration host factor subunit alpha from Coxiella burnetii (strain CbuK_Q154) (Coxiella burnetii (strain Q154)).